A 214-amino-acid polypeptide reads, in one-letter code: Cell division protein SepF (214 aa).

A disordered region spans residues Glu25 to Gly51.

It belongs to the SepF family. In terms of assembly, homodimer. Interacts with FtsZ.

Its subcellular location is the cytoplasm. Cell division protein that is part of the divisome complex and is recruited early to the Z-ring. Probably stimulates Z-ring formation, perhaps through the cross-linking of FtsZ protofilaments. Its function overlaps with FtsA. This Mycolicibacterium smegmatis (strain ATCC 700084 / mc(2)155) (Mycobacterium smegmatis) protein is Cell division protein SepF.